The following is a 297-amino-acid chain: 33 kDa chaperonin (297 aa).

Disulfide bonds link C239–C241 and C272–C275.

It belongs to the HSP33 family. In terms of processing, under oxidizing conditions two disulfide bonds are formed involving the reactive cysteines. Under reducing conditions zinc is bound to the reactive cysteines and the protein is inactive.

The protein localises to the cytoplasm. Its function is as follows. Redox regulated molecular chaperone. Protects both thermally unfolding and oxidatively damaged proteins from irreversible aggregation. Plays an important role in the bacterial defense system toward oxidative stress. The sequence is that of 33 kDa chaperonin from Synechococcus elongatus (strain ATCC 33912 / PCC 7942 / FACHB-805) (Anacystis nidulans R2).